Reading from the N-terminus, the 420-residue chain is Carbohydrate sulfotransferase 1 (420 aa).

Position 1 (methionine 1) is a topological domain, cytoplasmic. A helical; Signal-anchor for type II membrane protein transmembrane segment spans residues glutamine 2–isoleucine 23. The Lumenal segment spans residues arginine 24–leucine 420. The N-linked (GlcNAc...) asparagine glycan is linked to asparagine 64. Threonine 77 to phenylalanine 83 provides a ligand contact to 3'-phosphoadenylyl sulfate. N-linked (GlcNAc...) asparagine glycosylation is found at asparagine 153 and asparagine 197. Arginine 242–serine 250 contacts 3'-phosphoadenylyl sulfate. Residues asparagine 342 and asparagine 405 are each glycosylated (N-linked (GlcNAc...) asparagine).

It belongs to the sulfotransferase 1 family. Gal/GlcNAc/GalNAc subfamily.

The protein localises to the golgi apparatus membrane. The catalysed reaction is 3'-phosphoadenylyl sulfate + keratan = adenosine 3',5'-bisphosphate + keratan 6'-sulfate.. Sulfotransferase that utilizes 3'-phospho-5'-adenylyl sulfate (PAPS) as sulfonate donor to catalyze the transfer of sulfate to position 6 of galactose (Gal) residues of keratan. The chain is Carbohydrate sulfotransferase 1 (chst1) from Danio rerio (Zebrafish).